Reading from the N-terminus, the 941-residue chain is Endoplasmic reticulum aminopeptidase 1 (941 aa).

A topological domain (cytoplasmic) is located at residue M1. A helical; Signal-anchor for type II membrane protein membrane pass occupies residues 2–21; that stretch reads VFLPLKWSLATMSFLLSSLL. The Lumenal segment spans residues 22–941; sequence ALLTVSTPSW…WLQSEKLERM (920 aa). N70 and N154 each carry an N-linked (GlcNAc...) asparagine glycan. Substrate-binding positions include E183 and 317–321; that span reads GAMEN. Residue H353 participates in Zn(2+) binding. The active-site Proton acceptor is the E354. 2 residues coordinate Zn(2+): H357 and E376. Cystine bridges form between C404-C443 and C736-C743. N414 carries an N-linked (GlcNAc...) asparagine glycan. N-linked (GlcNAc...) asparagine glycans are attached at residues N760 and N901.

The protein belongs to the peptidase M1 family. As to quaternary structure, monomer. May also exist as a heterodimer; with ERAP2. Interacts with RBMX. Zn(2+) is required as a cofactor. In terms of processing, N-glycosylated. As to expression, ubiquitous.

The protein localises to the endoplasmic reticulum membrane. Aminopeptidase that plays a central role in peptide trimming, a step required for the generation of most HLA class I-binding peptides. Peptide trimming is essential to customize longer precursor peptides to fit them to the correct length required for presentation on MHC class I molecules. Strongly prefers substrates 9-16 residues long. Rapidly degrades 13-mer to a 9-mer and then stops. Preferentially hydrolyzes the residue Leu and peptides with a hydrophobic C-terminus, while it has weak activity toward peptides with charged C-terminus. May play a role in the inactivation of peptide hormones. May be involved in the regulation of blood pressure through the inactivation of angiotensin II and/or the generation of bradykinin in the kidney. The polypeptide is Endoplasmic reticulum aminopeptidase 1 (ERAP1) (Homo sapiens (Human)).